A 126-amino-acid polypeptide reads, in one-letter code: Large ribosomal subunit protein uL22c (126 aa).

Belongs to the universal ribosomal protein uL22 family. In terms of assembly, part of the 50S ribosomal subunit.

The protein resides in the plastid. Its subcellular location is the chloroplast. Functionally, this protein binds specifically to 23S rRNA. Its function is as follows. The globular domain of the protein is located near the polypeptide exit tunnel on the outside of the subunit, while an extended beta-hairpin is found that lines the wall of the exit tunnel in the center of the 70S ribosome. The sequence is that of Large ribosomal subunit protein uL22c (rpl22) from Cryptomeria japonica (Japanese cedar).